The following is a 137-amino-acid chain: Holo-[acyl-carrier-protein] synthase (137 aa).

Aspartate 8 and glutamate 58 together coordinate Mg(2+).

The protein belongs to the P-Pant transferase superfamily. AcpS family. Mg(2+) is required as a cofactor.

It localises to the cytoplasm. The catalysed reaction is apo-[ACP] + CoA = holo-[ACP] + adenosine 3',5'-bisphosphate + H(+). Functionally, transfers the 4'-phosphopantetheine moiety from coenzyme A to a Ser of acyl-carrier-protein. The protein is Holo-[acyl-carrier-protein] synthase of Lactobacillus delbrueckii subsp. bulgaricus (strain ATCC 11842 / DSM 20081 / BCRC 10696 / JCM 1002 / NBRC 13953 / NCIMB 11778 / NCTC 12712 / WDCM 00102 / Lb 14).